The sequence spans 556 residues: Formate--tetrahydrofolate ligase (556 aa).

65 to 72 (TPAGEGKS) lines the ATP pocket.

The protein belongs to the formate--tetrahydrofolate ligase family.

The catalysed reaction is (6S)-5,6,7,8-tetrahydrofolate + formate + ATP = (6R)-10-formyltetrahydrofolate + ADP + phosphate. Its pathway is one-carbon metabolism; tetrahydrofolate interconversion. In Enterococcus faecalis (strain ATCC 700802 / V583), this protein is Formate--tetrahydrofolate ligase.